Reading from the N-terminus, the 106-residue chain is Small ribosomal subunit protein bS16 (106 aa).

Belongs to the bacterial ribosomal protein bS16 family.

This chain is Small ribosomal subunit protein bS16, found in Protochlamydia amoebophila (strain UWE25).